Reading from the N-terminus, the 179-residue chain is Large ribosomal subunit protein uL5 (179 aa).

This sequence belongs to the universal ribosomal protein uL5 family. In terms of assembly, part of the 50S ribosomal subunit; part of the 5S rRNA/L5/L18/L25 subcomplex. Contacts the 5S rRNA and the P site tRNA. Forms a bridge to the 30S subunit in the 70S ribosome.

This is one of the proteins that bind and probably mediate the attachment of the 5S RNA into the large ribosomal subunit, where it forms part of the central protuberance. In the 70S ribosome it contacts protein S13 of the 30S subunit (bridge B1b), connecting the 2 subunits; this bridge is implicated in subunit movement. Contacts the P site tRNA; the 5S rRNA and some of its associated proteins might help stabilize positioning of ribosome-bound tRNAs. The polypeptide is Large ribosomal subunit protein uL5 (Delftia acidovorans (strain DSM 14801 / SPH-1)).